A 122-amino-acid polypeptide reads, in one-letter code: UPF0102 protein CPF_1959 (122 aa).

Belongs to the UPF0102 family.

In Clostridium perfringens (strain ATCC 13124 / DSM 756 / JCM 1290 / NCIMB 6125 / NCTC 8237 / Type A), this protein is UPF0102 protein CPF_1959.